A 1020-amino-acid polypeptide reads, in one-letter code: FERM domain-containing protein 4A (1020 aa).

One can recognise an FERM domain in the interval 5–307; the sequence is RRCQVHLLDD…SQHQFYLDRK (303 aa). The segment at 343–405 is necessary for interaction with CYTH1; that stretch reads KGKIISGSSG…RLCLREAELT (63 aa). The span at 351–367 shows a compositional bias: low complexity; sequence SGSLLSSGSQESDSSQS. Positions 351 to 371 are disordered; it reads SGSLLSSGSQESDSSQSAKKD. Residues 367-401 are a coiled coil; it reads SAKKDMLAALKSRQEALEETLRQRLEELKRLCLRE. Phosphoserine is present on Ser-515. Residues 538 to 665 form a disordered region; sequence DEDSQVTSTI…MPSTPDLRVR (128 aa). Over residues 542–551 the composition is skewed to polar residues; sequence QVTSTISPLQ. Residues 556–572 are compositionally biased toward pro residues; sequence GLPPRPPSSHNRPPPPQ. The necessary for tight junction and adherens junction localization; Requires for interaction with PARD3 stretch occupies residues 565–920; sequence HNRPPPPQSL…QWYQRSTASH (356 aa). Phosphoserine is present on residues Ser-590 and Ser-601. A compositionally biased stretch (basic residues) spans 609–624; the sequence is VKKRSSHGHSSSHKRF. The segment covering 626–658 has biased composition (polar residues); the sequence is STGSCTEAGVSSSLQNSPIRSLPHWNSQSSMPS. A phosphoserine mark is found at Ser-666 and Ser-696. Disordered regions lie at residues 698–741 and 757–810; these read ESQG…HSSS and AEDS…QSQP. The span at 773–796 shows a compositional bias: low complexity; the sequence is RAAGALGSASSGSMPNLAARSGAA. Phosphoserine occurs at positions 785, 854, and 882. Disordered regions lie at residues 862 to 949 and 961 to 1020; these read KESW…STFV and CKAT…STDE. Basic and acidic residues predominate over residues 893–910; the sequence is DGAHDKGSGRAAVSDELR. A compositionally biased stretch (low complexity) spans 927 to 947; it reads SHTSSTSSDSGSQYSTSSQST. Polar residues-rich tracts occupy residues 967 to 981, 994 to 1004, and 1011 to 1020; these read ALPQ…SSEI, TWQTGEATENS, and ESPTHQSTDE.

As to quaternary structure, interacts (via coiled-coil domain) with CYTH1 (via coiled-coil domain). Interacts with PARD3 (via coiled-coil domain). Found in a complex with PARD3, CYTH1 and FRMD4A. Interacts with CYTH2. Interacts with CYTH3.

The protein resides in the cytoplasm. Its subcellular location is the cytoskeleton. It is found in the cell junction. The protein localises to the adherens junction. It localises to the tight junction. In terms of biological role, scaffolding protein that regulates epithelial cell polarity by connecting ARF6 activation with the PAR3 complex. Plays a redundant role with FRMD4B in epithelial polarization. May regulate MAPT secretion by activating ARF6-signaling. This is FERM domain-containing protein 4A (Frmd4a) from Mus musculus (Mouse).